The sequence spans 680 residues: UvrABC system protein C (680 aa).

A GIY-YIG domain is found at asparagine 66–valine 144. One can recognise a UVR domain in the interval glutamine 254 to valine 289.

The protein belongs to the UvrC family. Interacts with UvrB in an incision complex.

It is found in the cytoplasm. Its function is as follows. The UvrABC repair system catalyzes the recognition and processing of DNA lesions. UvrC both incises the 5' and 3' sides of the lesion. The N-terminal half is responsible for the 3' incision and the C-terminal half is responsible for the 5' incision. This is UvrABC system protein C from Rhizobium johnstonii (strain DSM 114642 / LMG 32736 / 3841) (Rhizobium leguminosarum bv. viciae).